Reading from the N-terminus, the 327-residue chain is GTPase Obg (327 aa).

Residues M1 to L159 enclose the Obg domain. The 168-residue stretch at A160 to I327 folds into the OBG-type G domain. ATP is bound by residues G166–S173, F191–I195, D213–G216, N280–E283, and S309–S311. Residues S173 and T193 each contribute to the Mg(2+) site.

The protein belongs to the TRAFAC class OBG-HflX-like GTPase superfamily. OBG GTPase family. Monomer. Requires Mg(2+) as cofactor.

It is found in the cytoplasm. In terms of biological role, an essential GTPase which binds GTP, GDP and possibly (p)ppGpp with moderate affinity, with high nucleotide exchange rates and a fairly low GTP hydrolysis rate. Plays a role in control of the cell cycle, stress response, ribosome biogenesis and in those bacteria that undergo differentiation, in morphogenesis control. The protein is GTPase Obg of Prochlorococcus marinus (strain MIT 9215).